The chain runs to 333 residues: Geminin coiled-coil domain-containing protein 1 (333 aa).

Positions 83 to 118 (QLYRNKQLQDTLLQKEEELARLHEENNHLRQYLNST) form a coiled coil. A compositionally biased stretch (basic residues) spans 145-154 (KEKRKPKEHR). The tract at residues 145-165 (KEKRKPKEHRHSPAEIPQFKT) is disordered.

This sequence belongs to the GEMC1 family. In terms of processing, highly phosphorylated by CDK2; stimulates initiation of DNA replication.

The protein localises to the nucleus. Functionally, regulator of DNA replication. Promotes initiation of chromosomal DNA replication by mediating TOPBP1- and CDK2-dependent recruitment of CDC45L onto replication origins. This chain is Geminin coiled-coil domain-containing protein 1 (Gmnc), found in Mus musculus (Mouse).